Reading from the N-terminus, the 102-residue chain is Small ribosomal subunit protein uS10 (102 aa).

Belongs to the universal ribosomal protein uS10 family. In terms of assembly, part of the 30S ribosomal subunit.

Its function is as follows. Involved in the binding of tRNA to the ribosomes. This Pyrococcus abyssi (strain GE5 / Orsay) protein is Small ribosomal subunit protein uS10.